The following is a 432-amino-acid chain: Trigger factor (432 aa).

In terms of domain architecture, PPIase FKBP-type spans 161–246 (EDRVTIDFTG…LKKVEERELP (86 aa)).

Belongs to the FKBP-type PPIase family. Tig subfamily. As to quaternary structure, homodimer and monomer. In vivo most of the ribosomes are in complex with monomeric TF. Uncomplexed TF, however, is in a monomer-dimer equilibrium with approximately two thirds of TF existing in a dimeric state.

The protein localises to the cytoplasm. It carries out the reaction [protein]-peptidylproline (omega=180) = [protein]-peptidylproline (omega=0). Functionally, involved in protein export. Acts as a chaperone by maintaining the newly synthesized protein in an open conformation. Functions as a peptidyl-prolyl cis-trans isomerase. In Escherichia coli O6:K15:H31 (strain 536 / UPEC), this protein is Trigger factor.